The chain runs to 214 residues: Imidazole glycerol phosphate synthase subunit HisH 2 (214 aa).

A Glutamine amidotransferase type-1 domain is found at K2–G210. C82 functions as the Nucleophile in the catalytic mechanism. Residues H185 and E187 contribute to the active site.

In terms of assembly, heterodimer of HisH and HisF.

Its subcellular location is the cytoplasm. It carries out the reaction 5-[(5-phospho-1-deoxy-D-ribulos-1-ylimino)methylamino]-1-(5-phospho-beta-D-ribosyl)imidazole-4-carboxamide + L-glutamine = D-erythro-1-(imidazol-4-yl)glycerol 3-phosphate + 5-amino-1-(5-phospho-beta-D-ribosyl)imidazole-4-carboxamide + L-glutamate + H(+). The catalysed reaction is L-glutamine + H2O = L-glutamate + NH4(+). Its pathway is amino-acid biosynthesis; L-histidine biosynthesis; L-histidine from 5-phospho-alpha-D-ribose 1-diphosphate: step 5/9. Its function is as follows. IGPS catalyzes the conversion of PRFAR and glutamine to IGP, AICAR and glutamate. The HisH subunit provides the glutamine amidotransferase activity that produces the ammonia necessary to HisF for the synthesis of IGP and AICAR. The chain is Imidazole glycerol phosphate synthase subunit HisH 2 (hisH2) from Vibrio vulnificus (strain YJ016).